The primary structure comprises 342 residues: Nucleoid-associated protein Spea_1765 (342 aa).

It belongs to the YejK family.

The protein resides in the cytoplasm. Its subcellular location is the nucleoid. In Shewanella pealeana (strain ATCC 700345 / ANG-SQ1), this protein is Nucleoid-associated protein Spea_1765.